We begin with the raw amino-acid sequence, 407 residues long: 1-deoxy-D-xylulose 5-phosphate reductoisomerase (407 aa).

NADPH-binding residues include T25, G26, S27, I28, N53, and N136. K137 provides a ligand contact to 1-deoxy-D-xylulose 5-phosphate. E138 contacts NADPH. Position 162 (D162) interacts with Mn(2+). 1-deoxy-D-xylulose 5-phosphate is bound by residues S163, E164, S188, and H211. Residue E164 participates in Mn(2+) binding. G217 contributes to the NADPH binding site. The 1-deoxy-D-xylulose 5-phosphate site is built by S224, N229, K230, and E233. A Mn(2+)-binding site is contributed by E233.

This sequence belongs to the DXR family. Mg(2+) serves as cofactor. Mn(2+) is required as a cofactor.

The catalysed reaction is 2-C-methyl-D-erythritol 4-phosphate + NADP(+) = 1-deoxy-D-xylulose 5-phosphate + NADPH + H(+). The protein operates within isoprenoid biosynthesis; isopentenyl diphosphate biosynthesis via DXP pathway; isopentenyl diphosphate from 1-deoxy-D-xylulose 5-phosphate: step 1/6. Catalyzes the NADPH-dependent rearrangement and reduction of 1-deoxy-D-xylulose-5-phosphate (DXP) to 2-C-methyl-D-erythritol 4-phosphate (MEP). The protein is 1-deoxy-D-xylulose 5-phosphate reductoisomerase of Rhodopseudomonas palustris (strain HaA2).